The following is a 258-amino-acid chain: Probable succinate transporter subunit YjjP (258 aa).

Helical transmembrane passes span 116–137, 143–160, 171–191, 197–217, and 231–251; these read YPRW…KLNN, AVVT…RQLL, FCIT…LPAF, IAMA…NAVA, and WAIA…AMTM.

This sequence belongs to the ThrE exporter (TC 2.A.79) family. As to quaternary structure, the transporter is composed of YjjB and YjjP.

The protein localises to the cell inner membrane. Functionally, involved in succinate export with YjjB. Both proteins are required for export. Participates in succinate export, but also in the export of other dicarboxylates, such as fumarate and malate. Contributes to succinate production under both aerobic and anaerobic conditions, and increases fumarate and malate production during anaerobic succinate production. The protein is Probable succinate transporter subunit YjjP of Klebsiella aerogenes (strain ATCC 13048 / DSM 30053 / CCUG 1429 / JCM 1235 / KCTC 2190 / NBRC 13534 / NCIMB 10102 / NCTC 10006 / CDC 819-56) (Enterobacter aerogenes).